We begin with the raw amino-acid sequence, 70 residues long: U-scoloptoxin(04)-Er3a (70 aa).

Positions 1 to 24 are cleaved as a signal peptide; that stretch reads MAAIRNLLILTMLLIVCVSWNADA.

The protein belongs to the scoloptoxin-04 family. Contains 2 disulfide bonds. As to expression, expressed by the venom gland.

Its subcellular location is the secreted. This is U-scoloptoxin(04)-Er3a from Ethmostigmus rubripes (Giant centipede).